Here is a 62-residue protein sequence, read N- to C-terminus: PGLAAAIPAPPESQEKKPLKPCCACPETKKARDACIIEKGEEHCGHLIEAHKECMRALGFKI.

At Ser-13 the chain carries Phosphoserine. Lys-17 bears the N6-acetyllysine mark. Residues Cys-22 and Cys-23 each contribute to the Cu cation site. One can recognise a CHCH domain in the interval Cys-22–Ile-62. Short sequence motifs (cx9C motif) lie at residues Cys-25 to Cys-35 and Cys-44 to Cys-54. Intrachain disulfides connect Cys-25–Cys-54 and Cys-35–Cys-44. Lys-29 bears the N6-acetyllysine mark.

This sequence belongs to the COX17 family. In terms of assembly, interacts with COA1. Interacts with the chaperone CHCHD4; this is important for correct folding and the formation of disulfide bonds that stabilize the structure. Acetylation by KAT8 promotes assembly of the mitochondrial respiratory chain complex IV (CIV).

It localises to the mitochondrion intermembrane space. The protein localises to the cytoplasm. Copper metallochaperone essential for the assembly of the mitochondrial respiratory chain complex IV (CIV), also known as cytochrome c oxidase. Binds two copper ions and delivers them to the metallochaperone SCO1 which transports the copper ions to the Cu(A) site on the cytochrome c oxidase subunit II (MT-CO2/COX2). This chain is Cytochrome c oxidase copper chaperone (COX17), found in Sus scrofa (Pig).